Here is a 185-residue protein sequence, read N- to C-terminus: Stathmin-4 (185 aa).

An SLD domain is found at 48–185 (SDMEVIELNK…EVRKNKEATR (138 aa)). The stretch at 90–185 (SLEEIQKKLE…EVRKNKEATR (96 aa)) forms a coiled coil. The interval 165 to 185 (ERLQEKDKHAEEVRKNKEATR) is disordered. Residues 166-185 (RLQEKDKHAEEVRKNKEATR) are compositionally biased toward basic and acidic residues.

This sequence belongs to the stathmin family. Nervous tissue.

This Xenopus laevis (African clawed frog) protein is Stathmin-4 (stmn4).